Consider the following 476-residue polypeptide: Cysteine--tRNA ligase (476 aa).

C36 contacts Zn(2+). The short motif at 38 to 48 is the 'HIGH' region element; it reads PTVYDYAHIGN. Residues C221, H246, and E250 each coordinate Zn(2+). A 'KMSKS' region motif is present at residues 278 to 282; that stretch reads KMSKS. Residue K281 coordinates ATP.

The protein belongs to the class-I aminoacyl-tRNA synthetase family. Monomer. Zn(2+) is required as a cofactor.

It is found in the cytoplasm. It catalyses the reaction tRNA(Cys) + L-cysteine + ATP = L-cysteinyl-tRNA(Cys) + AMP + diphosphate. The chain is Cysteine--tRNA ligase from Chlamydia caviae (strain ATCC VR-813 / DSM 19441 / 03DC25 / GPIC) (Chlamydophila caviae).